The sequence spans 589 residues: Putative adenine deaminase BC_3012 (589 aa).

This sequence belongs to the metallo-dependent hydrolases superfamily. Adenine deaminase family.

The catalysed reaction is adenine + H2O + H(+) = hypoxanthine + NH4(+). This Bacillus cereus (strain ATCC 14579 / DSM 31 / CCUG 7414 / JCM 2152 / NBRC 15305 / NCIMB 9373 / NCTC 2599 / NRRL B-3711) protein is Putative adenine deaminase BC_3012.